A 149-amino-acid polypeptide reads, in one-letter code: Large ribosomal subunit protein uL15 (149 aa).

A disordered region spans residues 14-63; the sequence is ASRKRVGRGSGSGLGCTSGKGNKGQNARAGGGVRPGFEGGQMPLQRRLPK. 2 stretches are compositionally biased toward gly residues: residues 21-35 and 42-52; these read RGSG…GKGN and AGGGVRPGFEG.

Belongs to the universal ribosomal protein uL15 family. In terms of assembly, part of the 50S ribosomal subunit.

In terms of biological role, binds to the 23S rRNA. This is Large ribosomal subunit protein uL15 from Nitratidesulfovibrio vulgaris (strain DSM 19637 / Miyazaki F) (Desulfovibrio vulgaris).